We begin with the raw amino-acid sequence, 258 residues long: Isoprenyl transferase 1 (258 aa).

The active site involves D39. D39 serves as a coordination point for Mg(2+). Residues 40 to 43 (GNRR), W44, R52, H57, and 85 to 87 (SND) each bind substrate. N88 acts as the Proton acceptor in catalysis. Residues R92, R207, and 213–215 (RLS) contribute to the substrate site. E226 is a binding site for Mg(2+).

The protein belongs to the UPP synthase family. Homodimer. Requires Mg(2+) as cofactor.

Its function is as follows. Catalyzes the condensation of isopentenyl diphosphate (IPP) with allylic pyrophosphates generating different type of terpenoids. The sequence is that of Isoprenyl transferase 1 from Tropheryma whipplei (strain TW08/27) (Whipple's bacillus).